The following is a 717-amino-acid chain: Ribosomal RNA large subunit methyltransferase K/L (717 aa).

A THUMP domain is found at 44-155; it reads DAYKVCIYSY…KQFVNVFLCL (112 aa).

Belongs to the methyltransferase superfamily. RlmKL family.

Its subcellular location is the cytoplasm. The enzyme catalyses guanosine(2445) in 23S rRNA + S-adenosyl-L-methionine = N(2)-methylguanosine(2445) in 23S rRNA + S-adenosyl-L-homocysteine + H(+). It catalyses the reaction guanosine(2069) in 23S rRNA + S-adenosyl-L-methionine = N(2)-methylguanosine(2069) in 23S rRNA + S-adenosyl-L-homocysteine + H(+). Its function is as follows. Specifically methylates the guanine in position 2445 (m2G2445) and the guanine in position 2069 (m7G2069) of 23S rRNA. This is Ribosomal RNA large subunit methyltransferase K/L from Francisella tularensis subsp. tularensis (strain WY96-3418).